The chain runs to 596 residues: Phosphoenolpyruvate carboxykinase [GTP] (596 aa).

Substrate-binding positions include Arg-77 and 205–207 (YGG). The Mn(2+) site is built by Lys-214 and His-234. Position 256 (Ser-256) interacts with substrate. 257–262 (ACGKTN) serves as a coordination point for GTP. Cys-258 is a catalytic residue. Asp-283 is a Mn(2+) binding site. The interval 362 to 388 (KKGSTEKAAHPNSRFTAPAKNNPAISP) is disordered. 373–375 (NSR) is a substrate binding site. GTP is bound by residues Arg-375, Arg-406, and 499–502 (YGDN).

Belongs to the phosphoenolpyruvate carboxykinase [GTP] family. As to quaternary structure, monomer. Mn(2+) is required as a cofactor.

Its subcellular location is the cytoplasm. The enzyme catalyses oxaloacetate + GTP = phosphoenolpyruvate + GDP + CO2. The protein operates within carbohydrate biosynthesis; gluconeogenesis. Its function is as follows. Catalyzes the conversion of oxaloacetate (OAA) to phosphoenolpyruvate (PEP), the rate-limiting step in the metabolic pathway that produces glucose from lactate and other precursors derived from the citric acid cycle. This Anaeromyxobacter dehalogenans (strain 2CP-1 / ATCC BAA-258) protein is Phosphoenolpyruvate carboxykinase [GTP].